A 449-amino-acid polypeptide reads, in one-letter code: Heterogeneous nuclear ribonucleoprotein H2 (449 aa).

M1 bears the N-acetylmethionine mark. M2 is modified (N-acetylmethionine; in Heterogeneous nuclear ribonucleoprotein H2, N-terminally processed). Residues 11-90 (FVVKVRGLPW…RYVEVFKSNS (80 aa)) enclose the RRM 1 domain. S23 is modified (phosphoserine). K35 is covalently cross-linked (Glycyl lysine isopeptide (Lys-Gly) (interchain with G-Cter in SUMO2)). S54 and S63 each carry phosphoserine. A Glycyl lysine isopeptide (Lys-Gly) (interchain with G-Cter in SUMO2) cross-link involves residue K87. Residue S90 is modified to Phosphoserine. Residue K98 forms a Glycyl lysine isopeptide (Lys-Gly) (interchain with G-Cter in SUMO2) linkage. In terms of domain architecture, RRM 2 spans 111 to 188 (GFVRLRGLPF…RYIEIFKSSR (78 aa)). The residue at position 233 (R233) is a Dimethylated arginine; alternate. R233 bears the Omega-N-methylarginine; alternate mark. The 1-1 repeat unit spans residues 234–249 (GAYGGGYGGYDDYGGY). The interval 234-433 (GAYGGGYGGY…YGGQSSMSGY (200 aa)) is 2 X 16 AA Gly-rich approximate repeats. At Y246 the chain carries Phosphotyrosine. One can recognise an RRM 3 domain in the interval 289 to 364 (HCVHMRGLPY…RYVELFLNST (76 aa)). S310 is modified (phosphoserine). 3 repeat units span residues 354–372 (HRYV…GGAY), 374–392 (HSYV…GGAY), and 418–433 (GGYG…MSGY). A 2 X 19 AA perfect repeats region spans residues 354–392 (HRYVELFLNSTAGTSGGAYDHSYVELFLNSTAGASGGAY).

In terms of assembly, component of a ribonucleoprotein complex containing mRNAs and RNA-binding proteins including DDX5, HNRNPH2 and SRSF1 as well as splicing regulator ARVCF. Interacts with TXNL4/DIM1.

The protein resides in the nucleus. The protein localises to the nucleoplasm. Functionally, this protein is a component of the heterogeneous nuclear ribonucleoprotein (hnRNP) complexes which provide the substrate for the processing events that pre-mRNAs undergo before becoming functional, translatable mRNAs in the cytoplasm. Binds poly(RG). In Mus musculus (Mouse), this protein is Heterogeneous nuclear ribonucleoprotein H2 (Hnrnph2).